Consider the following 331-residue polypeptide: Phosphate acyltransferase (331 aa).

This sequence belongs to the PlsX family. Homodimer. Probably interacts with PlsY.

It localises to the cytoplasm. The enzyme catalyses a fatty acyl-[ACP] + phosphate = an acyl phosphate + holo-[ACP]. The protein operates within lipid metabolism; phospholipid metabolism. Its function is as follows. Catalyzes the reversible formation of acyl-phosphate (acyl-PO(4)) from acyl-[acyl-carrier-protein] (acyl-ACP). This enzyme utilizes acyl-ACP as fatty acyl donor, but not acyl-CoA. The polypeptide is Phosphate acyltransferase (Malacoplasma penetrans (strain HF-2) (Mycoplasma penetrans)).